A 406-amino-acid polypeptide reads, in one-letter code: tRNA-specific 2-thiouridylase MnmA (406 aa).

ATP-binding positions include 6–13 (AMSGGVDS) and Leu-32. The active-site Nucleophile is the Cys-101. Cysteines 101 and 193 form a disulfide. Gly-125 provides a ligand contact to ATP. The tract at residues 143–145 (KDQ) is interaction with tRNA. The Cysteine persulfide intermediate role is filled by Cys-193. The segment at 378–406 (GAPIEEQPAPGTVGAVDADAIEQGEDAQR) is disordered. Acidic residues predominate over residues 396–406 (DAIEQGEDAQR).

Belongs to the MnmA/TRMU family.

Its subcellular location is the cytoplasm. The enzyme catalyses S-sulfanyl-L-cysteinyl-[protein] + uridine(34) in tRNA + AH2 + ATP = 2-thiouridine(34) in tRNA + L-cysteinyl-[protein] + A + AMP + diphosphate + H(+). Its function is as follows. Catalyzes the 2-thiolation of uridine at the wobble position (U34) of tRNA, leading to the formation of s(2)U34. The chain is tRNA-specific 2-thiouridylase MnmA from Corynebacterium urealyticum (strain ATCC 43042 / DSM 7109).